A 302-amino-acid polypeptide reads, in one-letter code: 4-hydroxy-tetrahydrodipicolinate synthase (302 aa).

Pyruvate is bound at residue T55. Residue Y144 is the Proton donor/acceptor of the active site. The Schiff-base intermediate with substrate role is filled by K172. V214 lines the pyruvate pocket.

This sequence belongs to the DapA family. In terms of assembly, homotetramer; dimer of dimers.

The protein localises to the cytoplasm. It catalyses the reaction L-aspartate 4-semialdehyde + pyruvate = (2S,4S)-4-hydroxy-2,3,4,5-tetrahydrodipicolinate + H2O + H(+). Its pathway is amino-acid biosynthesis; L-lysine biosynthesis via DAP pathway; (S)-tetrahydrodipicolinate from L-aspartate: step 3/4. Catalyzes the condensation of (S)-aspartate-beta-semialdehyde [(S)-ASA] and pyruvate to 4-hydroxy-tetrahydrodipicolinate (HTPA). This chain is 4-hydroxy-tetrahydrodipicolinate synthase, found in Synechococcus sp. (strain CC9605).